Reading from the N-terminus, the 454-residue chain is uncharacterized protein (454 aa).

The tract at residues 1 to 25 is disordered; sequence MHGPTSKAISRNVRSVKRPRRAPRP. A compositionally biased stretch (basic residues) spans 14-23; that stretch reads RSVKRPRRAP.

It is found in the cytoplasm. The protein localises to the nucleus. This is an uncharacterized protein from Saccharomyces cerevisiae (strain ATCC 204508 / S288c) (Baker's yeast).